The sequence spans 984 residues: MSETKIKIKDLATELNIAPKEVLAAAKKLDIPAKNATSTLTTEEARKVRGQVQEASGDARRKDGASDVIIRRRRKGSGAKPAAREEAAPAETEAQASPAQPEAKAAAPAAEAEEAPAAKPAPAKARKAEARTEAPRARIIRPATPQAEEKAEPAPETAAPAQPAPEAQSAAPEKVEAHDAGAPVQQAETTESAPAEPAAEKAPAEKRRYEVSMEPEKDSVQADTEADGDADGGRKKKKKKKREETAGPQVRVISRPDPAAVQAQAAAAAQAREERAERPDRGPRPAGARPAGPRPGGPRQGDSRPGDGRPAPRSGAPRPGGARPAAGFGQPAQAENSSPFADGQSKKKRQKGRRTVEFGDKGAGGKKMREDVGGNWNRGKKGKRKPETKPVSTQPQRAAKRKIKVDEAIRVSDFAHQMGVKAPEIIKILMSLGIMATINQSLDIDTATVVAAEFGYEVEKVGFSEDEFLLPKEVDADELLLPRPPVVTIMGHVDHGKTSLLDAIRKSSVTTGEAGGITQHIGAYHVSTKRGDIVFLDTPGHEAFTAMRARGAQVTDLVILVVAADDGVMEQTREAISHAKAAGVPIVVAVNKIDKEGANRDRVMRELAEQDLVPEEWGGDTIFSYVSAKTREGLDDLLEMLALQAEVLELKANPDKPARGRIVEAKLDKGRGAVGTVLIQEGTLKHGDAFVCGVFSGRVRAMFNDQGKKAKQAGPSIPVEVQGFEGVPVAGEEFICVKDEKVARRIAEQRAIKQRERDLARESKVTLETFLARRKTDAETQTLNLVLKADVQGSVGAITDALRKMQTEKVKVDIIHSGAGAITESDILLASASDAIIIGFNVRPTAKVKDVAEQEKVEIRFYDIIYKLSEEIKSAMAGLLAPVVREQYLGQAEVRETFSVPKVGTVAGCHVADGKIIRNTKVRLLRDGVVIYTGRINSLKRFKDDVKEVAKGFECGMGLENYNDIKIGDIIEAFEEVEEAATLD.

The interval 32 to 402 is disordered; sequence PAKNATSTLT…TQPQRAAKRK (371 aa). The span at 89–123 shows a compositional bias: low complexity; that stretch reads PAETEAQASPAQPEAKAAAPAAEAEEAPAAKPAPA. A compositionally biased stretch (basic and acidic residues) spans 126 to 136; sequence RKAEARTEAPR. 2 stretches are compositionally biased toward low complexity: residues 154–172 and 187–197; these read APETAAPAQPAPEAQSAAP and AETTESAPAEP. Positions 198-220 are enriched in basic and acidic residues; that stretch reads AAEKAPAEKRRYEVSMEPEKDSV. Residues 255–270 are compositionally biased toward low complexity; the sequence is RPDPAAVQAQAAAAAQ. The span at 271-283 shows a compositional bias: basic and acidic residues; it reads AREERAERPDRGP. A compositionally biased stretch (low complexity) spans 308–334; sequence GRPAPRSGAPRPGGARPAAGFGQPAQA. The 170-residue stretch at 482–651 folds into the tr-type G domain; the sequence is PRPPVVTIMG…ALQAEVLELK (170 aa). The interval 491-498 is G1; the sequence is GHVDHGKT. 491–498 contacts GTP; the sequence is GHVDHGKT. Residues 516–520 form a G2 region; the sequence is GITQH. The segment at 537-540 is G3; the sequence is DTPG. GTP contacts are provided by residues 537-541 and 591-594; these read DTPGH and NKID. Residues 591-594 form a G4 region; the sequence is NKID. Positions 627–629 are G5; it reads SAK.

It belongs to the TRAFAC class translation factor GTPase superfamily. Classic translation factor GTPase family. IF-2 subfamily.

The protein localises to the cytoplasm. Functionally, one of the essential components for the initiation of protein synthesis. Protects formylmethionyl-tRNA from spontaneous hydrolysis and promotes its binding to the 30S ribosomal subunits. Also involved in the hydrolysis of GTP during the formation of the 70S ribosomal complex. This is Translation initiation factor IF-2 from Oleidesulfovibrio alaskensis (strain ATCC BAA-1058 / DSM 17464 / G20) (Desulfovibrio alaskensis).